Consider the following 1368-residue polypeptide: MKKSDSSSSLVFSGIQIEINNNYGSGSGSNNNNNNNNNNNNINNNNNPNNNPNNNGPPLRPSSEWVLLSSSQPTIATTTNLTTNAPLSDSMIMNYVGNDNLNTPITPSTSSPYLKRNNSNLNSIIENSNNSSPSNAITRNNSFNMDPNNNNNNNNNNNNNNNNNNNNGEYMNSSIVFDNNVNNNNNNPNNNPNNNVHSNSHNTNNSITHSGSITSSNSNNNNSNNNNNNNSNNNNNINNSVNSVNSLMMNSDKNCNHQFPSDDVLISNEHDIIDLALNKEFLNQYRIQTNSIFINSQHVINQDVQSYQDYESLLSSYNTILNQLLLITSSNKNNNNNNNPNNNNNNVTSPNSLLSPPSTSQLQQQQQQQQQSPSPPLNNNNNNNNNNNNNNNNNNNNNNNNNNNNNNNNYYLMSTSTMSSTTTNLSTSTNSNINTNIPTNYNMSTSITATTTTTTATNTIAIGTTTTAAITTAATNSTNSNNLNLSSTNLGLDNNFLYQRILPEILSLLEKLTVFSRNNDTEIFNRLGNNVKLIFDHLNLIKNDILEANFSHLSGIFTIYNHTIISSDKTTKQFVFRFLHSLAPMTVPPAIVVTPELKKVVQKIHFSKPTFTPLCIEWKEICKYIDVLKSVSLFIAQVGQYCFLNQSIIINDELLFIPSIYVLFDNIQNLSMKEERFHIEYILHNLKFIVSKIPKQTREFTKTEIERLYSYIRGNPSYVKEILPKLLKNIYIDPYFYHLWNNHCIHLLNNNINNNNNNNTNNSSNNSNNNNNTNINIGKDIGNDLTLLLVSNKNSFLLSFDERHFSIFYSSISNSTTTTITPTITSPNNNSNRINNNNNNNNNNNNNNNNNNNINVNNNVNNNNVNNNNNNNNNNSNQYIVNYFDNTTSLLNFIESNQFKYIILSNKEVETIKFFKSVLPVTLPLPQPSSRQAILQQQQQQNYKPRILCGPCLSRFKTILDEFDNEESIENQIYSNYLNNINNNENIDPNLIDGNENKINGNDNNNNHDDDEKTNNNNNNNNNNNNNNNNNIYNNNNIEDYNNNNDNNYNFENEINDKENEFRELEKEINEIEKEEQELIKEYLELENRNQINLDIKQKLEDILKEIKLEEKTHYDLVNNYYQEYFDLKQEDEIYTNQINAIRDQLERVSQIDINKITFKIELPNTGVNGGIVGYNESSNTTISSINGFRLGTLSNLKVDWEEINSAWGETSLLLYVLASQLEFNFQNYKLIPMSSKSIIQSKNDKMSYTLYGGDNIQFSRSFLWFGASDQRFDSGMEAFLSCVNDIATFVQSKKPSINFNYRISKDKIGDSNRLLSIKIAGNSELNWTMALRFMLSNLKKILDNLDSIVESKQKQQQLQRQQSLNNL.

2 stretches are compositionally biased toward low complexity: residues 24–57 and 122–135; these read GSGS…NNGP and NSII…SPSN. Disordered regions lie at residues 24–64, 122–249, 331–431, 819–874, and 992–1048; these read GSGS…PSSE, NSII…SLMM, NKNN…STNS, TITP…NNNN, and IDGN…NDNN. Positions 136–147 are enriched in polar residues; the sequence is AITRNNSFNMDP. Positions 148 to 167 are enriched in low complexity; it reads NNNNNNNNNNNNNNNNNNNN. Residues 168 to 177 show a composition bias toward polar residues; it reads GEYMNSSIVF. Positions 179-246 are enriched in low complexity; sequence NNVNNNNNNP…INNSVNSVNS (68 aa). 2 stretches are compositionally biased toward low complexity: residues 992-1005 and 1015-1048; these read IDGN…NDNN and NNNN…NDNN. Residues 1047–1150 are a coiled coil; sequence NNYNFENEIN…AIRDQLERVS (104 aa).

It belongs to the beclin family.

It localises to the endosome membrane. Its function is as follows. Involved in autophagy. May be required to recruit the atg8-phosphatidylinositol conjugate and the atg12-atg5 conjugate to the pre-autophagosomal structure. Required for normal survival when exposed to pathogenic bacteria S.typhimurium by promoting autophagic degradation of intracellular S.typhimurium. The sequence is that of Beclin-1-like protein A (atg6A) from Dictyostelium discoideum (Social amoeba).